We begin with the raw amino-acid sequence, 883 residues long: Phosphoenolpyruvate carboxylase (883 aa).

Active-site residues include His138 and Lys546.

Belongs to the PEPCase type 1 family. Requires Mg(2+) as cofactor.

It catalyses the reaction oxaloacetate + phosphate = phosphoenolpyruvate + hydrogencarbonate. In terms of biological role, forms oxaloacetate, a four-carbon dicarboxylic acid source for the tricarboxylic acid cycle. The protein is Phosphoenolpyruvate carboxylase of Escherichia coli O7:K1 (strain IAI39 / ExPEC).